Consider the following 668-residue polypeptide: Fructose-1,6-bisphosphatase class 3 (668 aa).

This sequence belongs to the FBPase class 3 family. The cofactor is Mn(2+).

The catalysed reaction is beta-D-fructose 1,6-bisphosphate + H2O = beta-D-fructose 6-phosphate + phosphate. It functions in the pathway carbohydrate biosynthesis; gluconeogenesis. The polypeptide is Fructose-1,6-bisphosphatase class 3 (Clostridium botulinum (strain Langeland / NCTC 10281 / Type F)).